The chain runs to 451 residues: Bifunctional protein GlmU (451 aa).

A pyrophosphorylase region spans residues 1 to 225 (MVVVAILAAG…YQEILGINDR (225 aa)). Residues 7–10 (LAAG), Lys-21, Gln-72, and 77–78 (GT) contribute to the UDP-N-acetyl-alpha-D-glucosamine site. A Mg(2+)-binding site is contributed by Asp-102. UDP-N-acetyl-alpha-D-glucosamine-binding residues include Gly-139, Glu-154, Asn-169, and Asn-223. Asn-223 contributes to the Mg(2+) binding site. A linker region spans residues 226–246 (LQLATAYEILQRRVKEQWMMA). The interval 247-451 (GVTLIDPNSI…LGWRRKSGES (205 aa)) is N-acetyltransferase. Residues Arg-328 and Lys-346 each coordinate UDP-N-acetyl-alpha-D-glucosamine. His-358 (proton acceptor) is an active-site residue. 2 residues coordinate UDP-N-acetyl-alpha-D-glucosamine: Tyr-361 and Asn-372. Acetyl-CoA contacts are provided by residues Ala-375, 381 to 382 (NY), Ser-400, Ala-418, and Arg-435.

The protein in the N-terminal section; belongs to the N-acetylglucosamine-1-phosphate uridyltransferase family. This sequence in the C-terminal section; belongs to the transferase hexapeptide repeat family. As to quaternary structure, homotrimer. Requires Mg(2+) as cofactor.

It is found in the cytoplasm. It carries out the reaction alpha-D-glucosamine 1-phosphate + acetyl-CoA = N-acetyl-alpha-D-glucosamine 1-phosphate + CoA + H(+). It catalyses the reaction N-acetyl-alpha-D-glucosamine 1-phosphate + UTP + H(+) = UDP-N-acetyl-alpha-D-glucosamine + diphosphate. It participates in nucleotide-sugar biosynthesis; UDP-N-acetyl-alpha-D-glucosamine biosynthesis; N-acetyl-alpha-D-glucosamine 1-phosphate from alpha-D-glucosamine 6-phosphate (route II): step 2/2. It functions in the pathway nucleotide-sugar biosynthesis; UDP-N-acetyl-alpha-D-glucosamine biosynthesis; UDP-N-acetyl-alpha-D-glucosamine from N-acetyl-alpha-D-glucosamine 1-phosphate: step 1/1. The protein operates within bacterial outer membrane biogenesis; LPS lipid A biosynthesis. Its function is as follows. Catalyzes the last two sequential reactions in the de novo biosynthetic pathway for UDP-N-acetylglucosamine (UDP-GlcNAc). The C-terminal domain catalyzes the transfer of acetyl group from acetyl coenzyme A to glucosamine-1-phosphate (GlcN-1-P) to produce N-acetylglucosamine-1-phosphate (GlcNAc-1-P), which is converted into UDP-GlcNAc by the transfer of uridine 5-monophosphate (from uridine 5-triphosphate), a reaction catalyzed by the N-terminal domain. The protein is Bifunctional protein GlmU of Nostoc sp. (strain PCC 7120 / SAG 25.82 / UTEX 2576).